Consider the following 188-residue polypeptide: Putative protein SSX9 (188 aa).

The 64-residue stretch at 20–83 (KIQKAFDDIA…TGATDLQGND (64 aa)) folds into the KRAB-related domain. A disordered region spans residues 114 to 165 (KKPAEVGNDSKEVPEASGLQNDGKQLCPPGKPTTSEKINKASGPKRGKHAWT). Residues 115–127 (KPAEVGNDSKEVP) are compositionally biased toward basic and acidic residues. Residue Ser-123 is modified to Phosphoserine. Over residues 156-165 (GPKRGKHAWT) the composition is skewed to basic residues.

The protein belongs to the SSX family. In terms of tissue distribution, not detected in any normal or tumor tissues.

In terms of biological role, could act as a modulator of transcription. The chain is Putative protein SSX9 from Homo sapiens (Human).